Consider the following 297-residue polypeptide: D-alanine--D-alanine ligase (297 aa).

The ATP-grasp domain occupies Lys103 to Glu293. Residue Ile129–Thr180 participates in ATP binding. Residues Asp247, Glu260, and Asn262 each contribute to the Mg(2+) site.

This sequence belongs to the D-alanine--D-alanine ligase family. Mg(2+) serves as cofactor. It depends on Mn(2+) as a cofactor.

It localises to the cytoplasm. It carries out the reaction 2 D-alanine + ATP = D-alanyl-D-alanine + ADP + phosphate + H(+). The protein operates within cell wall biogenesis; peptidoglycan biosynthesis. Its function is as follows. Cell wall formation. The sequence is that of D-alanine--D-alanine ligase from Francisella philomiragia subsp. philomiragia (strain ATCC 25017 / CCUG 19701 / FSC 153 / O#319-036).